Here is a 724-residue protein sequence, read N- to C-terminus: Acyl-coenzyme A oxidase 2 (724 aa).

The interval 1–23 is disordered; the sequence is MALISNLKDEYDHPTKTDPDTNP. Residues 7–21 show a composition bias toward basic and acidic residues; the sequence is LKDEYDHPTKTDPDT.

It belongs to the acyl-CoA oxidase family. It depends on FAD as a cofactor.

It localises to the peroxisome. The catalysed reaction is a 2,3-saturated acyl-CoA + O2 = a (2E)-enoyl-CoA + H2O2. Its pathway is lipid metabolism; peroxisomal fatty acid beta-oxidation. This chain is Acyl-coenzyme A oxidase 2 (POX2), found in Candida maltosa (Yeast).